A 437-amino-acid polypeptide reads, in one-letter code: Type II methylase M.HgiEI (437 aa).

One can recognise an SAM-dependent MTase C5-type domain in the interval 4–431 (FRFIDLFAGI…KRLQCVKLFE (428 aa)). Residue Cys-75 is part of the active site.

It belongs to the class I-like SAM-binding methyltransferase superfamily. C5-methyltransferase family.

The catalysed reaction is a 2'-deoxycytidine in DNA + S-adenosyl-L-methionine = a 5-methyl-2'-deoxycytidine in DNA + S-adenosyl-L-homocysteine + H(+). Its function is as follows. A methylase that recognizes the double-stranded sequence 5'-GGWCC-3', methylates C-? on both strands, and protects the DNA from cleavage by the HgiEI endonuclease. This system is more active than isoschizomeric RM.HgiBI. This chain is Type II methylase M.HgiEI, found in Herpetosiphon aurantiacus (Herpetosiphon giganteus).